The primary structure comprises 378 residues: Chaperone protein DnaJ (378 aa).

The J domain maps to 5-69 (EYYDRLGVSK…QKRAAYDQYG (65 aa)). The CR-type zinc-finger motif lies at 134–216 (GVEKEVSYNR…CHGTGHEKQA (83 aa)). The Zn(2+) site is built by cysteine 147, cysteine 150, cysteine 164, cysteine 167, cysteine 190, cysteine 193, cysteine 204, and cysteine 207. CXXCXGXG motif repeat units lie at residues 147–154 (CGTCLGSG), 164–171 (CRKCHGSG), 190–197 (CDICHGSG), and 204–211 (CQTCHGTG).

This sequence belongs to the DnaJ family. As to quaternary structure, homodimer. The cofactor is Zn(2+).

The protein localises to the cytoplasm. Participates actively in the response to hyperosmotic and heat shock by preventing the aggregation of stress-denatured proteins and by disaggregating proteins, also in an autonomous, DnaK-independent fashion. Unfolded proteins bind initially to DnaJ; upon interaction with the DnaJ-bound protein, DnaK hydrolyzes its bound ATP, resulting in the formation of a stable complex. GrpE releases ADP from DnaK; ATP binding to DnaK triggers the release of the substrate protein, thus completing the reaction cycle. Several rounds of ATP-dependent interactions between DnaJ, DnaK and GrpE are required for fully efficient folding. Also involved, together with DnaK and GrpE, in the DNA replication of plasmids through activation of initiation proteins. The protein is Chaperone protein DnaJ of Streptococcus pyogenes serotype M6 (strain ATCC BAA-946 / MGAS10394).